Here is a 603-residue protein sequence, read N- to C-terminus: Cell division control protein 48 homolog B (603 aa).

ATP contacts are provided by residues 63–70 (GPPGTGKT) and 327–334 (GPPGCSKT).

This sequence belongs to the AAA ATPase family.

The protein localises to the nucleus. It localises to the cytoplasm. The protein resides in the cytoskeleton. It is found in the phragmoplast. Its function is as follows. Probably functions in cell division and growth processes. Interacts with certain SNAREs as part of specialized membrane fusion events where vesicles from the same organelle fuse (homotypic fusion). The sequence is that of Cell division control protein 48 homolog B (CDC48B) from Arabidopsis thaliana (Mouse-ear cress).